A 1004-amino-acid polypeptide reads, in one-letter code: 2-oxoglutarate dehydrogenase E1 component (1004 aa).

The protein belongs to the alpha-ketoglutarate dehydrogenase family. In terms of assembly, homodimer. Part of the 2-oxoglutarate dehydrogenase (OGDH) complex composed of E1 (2-oxoglutarate dehydrogenase), E2 (dihydrolipoamide succinyltransferase) and E3 (dihydrolipoamide dehydrogenase); the complex contains multiple copies of the three enzymatic components (E1, E2 and E3). It depends on thiamine diphosphate as a cofactor.

It catalyses the reaction N(6)-[(R)-lipoyl]-L-lysyl-[protein] + 2-oxoglutarate + H(+) = N(6)-[(R)-S(8)-succinyldihydrolipoyl]-L-lysyl-[protein] + CO2. In terms of biological role, E1 component of the 2-oxoglutarate dehydrogenase (OGDH) complex which catalyzes the decarboxylation of 2-oxoglutarate, the first step in the conversion of 2-oxoglutarate to succinyl-CoA and CO(2). This Brucella suis (strain ATCC 23445 / NCTC 10510) protein is 2-oxoglutarate dehydrogenase E1 component.